We begin with the raw amino-acid sequence, 408 residues long: MQTLPTPTTSSNTANQSTFDTTIKRRKTRPVKVGNVTIGGGYPVVVQSMINEDTLDIDGSVAAIRRLHEIGCEIVRVTVPSIAHAVALAEIKQKLITTYQDVPIVADVHHNGMKIALEVAKHIEKVRINPGLYVFEKPNTNRTEYTQAEFEEIGEKIRETLAPLVITLRDQGKAMRIGVNHGSLAERMLFTYGDTPEGMVESALEFIRICESLDFRNIVISMKASRVPVMVAAYRLMAKRMDDLGMDYPLHLGVTEAGDGEYGRIKSTAGIATLLADGIGDTIRVSLTEAPEKEIPVCYSILQALGLRKTMVEYVACPSCGRTLFNLEEVLHKVRESTKHLTGLDIAVMGCIVNGPGEMADADYGYVGKTPGYISLYRGREEIKKVPEDKGVEELINLIKADGRWVDP.

Residues 1 to 21 (MQTLPTPTTSSNTANQSTFDT) are compositionally biased toward polar residues. The segment at 1 to 26 (MQTLPTPTTSSNTANQSTFDTTIKRR) is disordered. Residues cysteine 317, cysteine 320, cysteine 351, and glutamate 358 each contribute to the [4Fe-4S] cluster site.

Belongs to the IspG family. Requires [4Fe-4S] cluster as cofactor.

It carries out the reaction (2E)-4-hydroxy-3-methylbut-2-enyl diphosphate + 2 oxidized [2Fe-2S]-[ferredoxin] + H2O = 2-C-methyl-D-erythritol 2,4-cyclic diphosphate + 2 reduced [2Fe-2S]-[ferredoxin] + H(+). Its pathway is isoprenoid biosynthesis; isopentenyl diphosphate biosynthesis via DXP pathway; isopentenyl diphosphate from 1-deoxy-D-xylulose 5-phosphate: step 5/6. Its function is as follows. Converts 2C-methyl-D-erythritol 2,4-cyclodiphosphate (ME-2,4cPP) into 1-hydroxy-2-methyl-2-(E)-butenyl 4-diphosphate. This is 4-hydroxy-3-methylbut-2-en-1-yl diphosphate synthase (ferredoxin) from Trichormus variabilis (strain ATCC 29413 / PCC 7937) (Anabaena variabilis).